A 443-amino-acid polypeptide reads, in one-letter code: Serine/threonine-protein kinase ISR1 (443 aa).

Residues 135–415 (LPSNKLVGQG…LRNDLFQDWK (281 aa)) form the Protein kinase domain. ATP is bound by residues 141 to 149 (VGQGSYSYV) and lysine 169. Residue aspartate 280 is the Proton acceptor of the active site.

The protein belongs to the protein kinase superfamily. Ser/Thr protein kinase family.

The enzyme catalyses L-seryl-[protein] + ATP = O-phospho-L-seryl-[protein] + ADP + H(+). The catalysed reaction is L-threonyl-[protein] + ATP = O-phospho-L-threonyl-[protein] + ADP + H(+). Probable serine/threonine protein kinase which may function redundantly with MPK1-independent branch of the PCK1 pathway that is presumed to be required for the tolerance to high temperatures and staurosporine. The chain is Serine/threonine-protein kinase ISR1 (ISR1) from Saccharomyces cerevisiae (strain ATCC 204508 / S288c) (Baker's yeast).